The chain runs to 391 residues: Protein CapJ (391 aa).

It participates in capsule biogenesis; capsule polysaccharide biosynthesis. Its function is as follows. Required for the biosynthesis of type 1 capsular polysaccharide. The sequence is that of Protein CapJ (capJ) from Staphylococcus aureus.